Here is a 156-residue protein sequence, read N- to C-terminus: Persephin (156 aa).

The first 21 residues, 1–21, serve as a signal peptide directing secretion; it reads MAVGKFLLGSLLLLSLQLGQG. Disulfide bonds link Cys66-Cys124, Cys93-Cys152, and Cys97-Cys154.

This sequence belongs to the TGF-beta family. GDNF subfamily. Homodimer; disulfide-linked. Interacts with GFRA4 coreceptor and RET: forms a 2:2:2 ternary complex composed of PSPN ligand, GFRA4 and RET receptor.

The protein resides in the secreted. Functionally, growth factor that exhibits neurotrophic activity on mesencephalic dopaminergic and motor neurons. Acts by binding to its coreceptor, GFRA4, leading to autophosphorylation and activation of the RET receptor. The sequence is that of Persephin from Homo sapiens (Human).